The sequence spans 277 residues: Pantothenate synthetase (277 aa).

Residue 26 to 33 (MGNLHEGH) participates in ATP binding. The active-site Proton donor is the His33. (R)-pantoate is bound at residue Gln57. Residue Gln57 coordinates beta-alanine. 144-147 (GKKD) contributes to the ATP binding site. (R)-pantoate is bound at residue Gln150. ATP-binding positions include Val173 and 181 to 184 (LSSR).

The protein belongs to the pantothenate synthetase family. Homodimer.

Its subcellular location is the cytoplasm. It catalyses the reaction (R)-pantoate + beta-alanine + ATP = (R)-pantothenate + AMP + diphosphate + H(+). It functions in the pathway cofactor biosynthesis; (R)-pantothenate biosynthesis; (R)-pantothenate from (R)-pantoate and beta-alanine: step 1/1. Its function is as follows. Catalyzes the condensation of pantoate with beta-alanine in an ATP-dependent reaction via a pantoyl-adenylate intermediate. The sequence is that of Pantothenate synthetase from Paraburkholderia phymatum (strain DSM 17167 / CIP 108236 / LMG 21445 / STM815) (Burkholderia phymatum).